We begin with the raw amino-acid sequence, 1252 residues long: DNA-directed RNA polymerase subunit beta (1252 aa).

It belongs to the RNA polymerase beta chain family. The RNAP catalytic core consists of 2 alpha, 1 beta, 1 beta' and 1 omega subunit. When a sigma factor is associated with the core the holoenzyme is formed, which can initiate transcription.

It catalyses the reaction RNA(n) + a ribonucleoside 5'-triphosphate = RNA(n+1) + diphosphate. DNA-dependent RNA polymerase catalyzes the transcription of DNA into RNA using the four ribonucleoside triphosphates as substrates. The chain is DNA-directed RNA polymerase subunit beta from Chlamydia pneumoniae (Chlamydophila pneumoniae).